Here is a 101-residue protein sequence, read N- to C-terminus: Non-structural protein NS-S (101 aa).

Belongs to the orthobunyavirus NS-S protein family.

The polypeptide is Non-structural protein NS-S (N) (Equus caballus (Horse)).